The primary structure comprises 119 residues: Protein Wnt-4 (119 aa).

Ser-1 carries the O-palmitoleoyl serine; by PORCN lipid modification. 2 disulfide bridges follow: Cys-69/Cys-100 and Cys-85/Cys-95. An N-linked (GlcNAc...) asparagine glycan is attached at Asn-86.

Belongs to the Wnt family. Palmitoleoylation is required for efficient binding to frizzled receptors. Depalmitoleoylation leads to Wnt signaling pathway inhibition.

Its subcellular location is the secreted. The protein resides in the extracellular space. It is found in the extracellular matrix. Its function is as follows. Ligand for members of the frizzled family of seven transmembrane receptors. Plays an important role in embryonic development. The protein is Protein Wnt-4 (WNT-4) of Plethodon jordani (Red-cheeked salamander).